The primary structure comprises 300 residues: Heme A synthase (300 aa).

Topologically, residues 1 to 8 are cytoplasmic; the sequence is MLKEKNLK. Residues 9 to 29 form a helical membrane-spanning segment; it reads WLSLFTTVLMLFVQIGGALVT. Residues 30-64 are Extracellular-facing; it reads KTGSADGCGSSWPLCHGKFVPTHIPKETLIELAHR. C37 and C44 form a disulfide bridge. The active site involves E60. Residue H63 coordinates heme o. Residues 65-85 traverse the membrane as a helical segment; it reads GVSGLALLSVTWLVILSIKYI. The Cytoplasmic segment spans residues 86-92; it reads GHKKETK. The chain crosses the membrane as a helical span at residues 93-113; that stretch reads FLCYMSIGFIFAQALIGAAAV. At 114-123 the chain is on the extracellular side; sequence MWQQNGFVLA. A helical transmembrane segment spans residues 124–144; the sequence is LHFGISLISFSAVFLLTLLIF. H125 provides a ligand contact to heme o. Residues 145–163 lie on the Cytoplasmic side of the membrane; it reads EVDQKFDATKLILQPKLRR. The helical transmembrane segment at 164–184 threads the bilayer; the sequence is HTIGLTSFIYFVIYSGALVRH. Residues 185 to 218 lie on the Extracellular side of the membrane; it reads EKASLACSSWPLCRKGAFILPQNFYEWVQMSHRT. Cysteines 191 and 197 form a disulfide. H216 contacts heme b. Residues 219-239 form a helical membrane-spanning segment; that stretch reads LAFILFIWLTYVAFHAMRNYA. Residues 240–249 lie on the Cytoplasmic side of the membrane; the sequence is QYRVIKYGYM. The helical transmembrane segment at 250 to 270 threads the bilayer; that stretch reads IAFILICLQVTTGALTIFTAV. The Extracellular segment spans residues 271-275; it reads NLYIA. The chain crosses the membrane as a helical span at residues 276 to 296; sequence LLHALFITLLFGLLCYFILLI. H278 provides a ligand contact to heme b. The Cytoplasmic segment spans residues 297–300; that stretch reads SRAK.

The protein belongs to the COX15/CtaA family. Type 1 subfamily. Interacts with CtaB. Heme b is required as a cofactor.

It localises to the cell membrane. It catalyses the reaction Fe(II)-heme o + 2 A + H2O = Fe(II)-heme a + 2 AH2. It functions in the pathway porphyrin-containing compound metabolism; heme A biosynthesis; heme A from heme O: step 1/1. Catalyzes the conversion of heme O to heme A by two successive hydroxylations of the methyl group at C8. The first hydroxylation forms heme I, the second hydroxylation results in an unstable dihydroxymethyl group, which spontaneously dehydrates, resulting in the formyl group of heme A. The sequence is that of Heme A synthase from Macrococcus caseolyticus (strain JCSC5402) (Macrococcoides caseolyticum).